The sequence spans 342 residues: Leucine-rich repeat-containing protein 23 (342 aa).

Residues 1 to 30 (MSDEDDLEDFETDQDDLEREDDEKETEEWE) show a composition bias toward acidic residues. A disordered region spans residues 1–42 (MSDEDDLEDFETDQDDLEREDDEKETEEWEDYRKEGEESEDW). Positions 3–27 (DEDDLEDFETDQDDLEREDDEKETE) form a coiled coil. LRR repeat units lie at residues 91–112 (HLRY…NHLT), 113–133 (NLLW…NELP), 134–154 (YLQI…ISHP), 155–176 (RLAS…DPQK), 179–199 (SLHT…INLP), 200–221 (KLKN…ENLS), 222–243 (NLTT…SKEM), and 245–266 (SLQY…AKLR). The segment at 207–342 (AQNMLKKVEG…PESELDQSST (136 aa)) is interaction with RSPH9. An LRRCT domain is found at 279–317 (NPCTDENDYRQEALVQIAHLERLDKEFYEEEERAEADEI). Positions 306–332 (YEEEERAEADEIRQRMKEEQEQEAEVE) form a coiled coil. The interval 307-342 (EEEERAEADEIRQRMKEEQEQEAEVEPESELDQSST) is disordered. Residues 314–324 (ADEIRQRMKEE) show a composition bias toward basic and acidic residues. A compositionally biased stretch (acidic residues) spans 325–342 (QEQEAEVEPESELDQSST).

As to quaternary structure, component of the axonemal radial spoke complex. Interacts with RSPH3. Interacts with RSPH9.

The protein localises to the cytoplasm. Its subcellular location is the cytoskeleton. It is found in the flagellum axoneme. Essential for sperm motility and male fertility. Plays an important role in the proper assembly of the third radial spoke (RS3) head and the bridge structure between RS2 and RS3 in the sperm flagella. This Bos taurus (Bovine) protein is Leucine-rich repeat-containing protein 23 (LRRC23).